The chain runs to 355 residues: uncharacterized protein (355 aa).

It belongs to the serpin family. Poxviruses subfamily.

This is an uncharacterized protein from Vertebrata (FPV).